The primary structure comprises 376 residues: Transforming growth factor beta-1 proprotein (376 aa).

The N-terminal stretch at 1 to 22 is a signal peptide; the sequence is MRVESLLLALQCLLGFVHYSGA. The interval 23 to 68 is straightjacket domain; that stretch reads LSTCSPLDLELIKRKRIEAIRGQILSKLRLSKEPEVDEEKESQNIP. The tract at residues 69–258 is arm domain; that stretch reads AELISVYNST…SLPLDGNNSS (190 aa). Asparagine 76, asparagine 125, and asparagine 167 each carry an N-linked (GlcNAc...) asparagine glycan. The bowtie tail stretch occupies residues 214–238; sequence DPQKTFQLKIPGLVLVRGDTETLAV. Positions 230–232 match the Cell attachment site motif; sequence RGD. 3 cysteine pairs are disulfide-bonded: cysteine 272/cysteine 280, cysteine 308/cysteine 373, and cysteine 312/cysteine 375.

Belongs to the TGF-beta family. As to quaternary structure, latency-associated peptide: Homodimer; disulfide-linked. Latency-associated peptide: Interacts with Transforming growth factor beta-1 (TGF-beta-1) chain; interaction is non-covalent and maintains (TGF-beta-1) in a latent state; each Latency-associated peptide (LAP) monomer interacts with TGF-beta-1 in the other monomer. Transforming growth factor beta-1: Homodimer; disulfide-linked. Transforming growth factor beta-1: Interacts with TGF-beta receptors (tgfbr1 and tgfbr2), leading to signal transduction. Interacts with EFEMP2. Transforming growth factor beta-1 proprotein: The precursor proprotein is cleaved in the Golgi apparatus to form Transforming growth factor beta-1 (TGF-beta-1) and Latency-associated peptide (LAP) chains, which remain non-covalently linked, rendering TGF-beta-1 inactive.

It localises to the secreted. It is found in the extracellular space. The protein localises to the extracellular matrix. Transforming growth factor beta-1 proprotein: Precursor of the Latency-associated peptide (LAP) and Transforming growth factor beta-1 (TGF-beta-1) chains, which constitute the regulatory and active subunit of TGF-beta-1, respectively. Its function is as follows. Required to maintain the Transforming growth factor beta-1 (TGF-beta-1) chain in a latent state during storage in extracellular matrix. Associates non-covalently with TGF-beta-1 and regulates its activation via interaction with 'milieu molecules', such as LTBP1, LRRC32/GARP and LRRC33/NRROS, that control activation of TGF-beta-1. Interaction with integrins (ITGAV:ITGB6 or ITGAV:ITGB8) results in distortion of the Latency-associated peptide chain and subsequent release of the active TGF-beta-1. In terms of biological role, transforming growth factor beta-1: Multifunctional protein that regulates the growth and differentiation of various cell types and is involved in various processes, such as normal development, immune function, microglia function and responses to neurodegeneration. Activation into mature form follows different steps: following cleavage of the proprotein in the Golgi apparatus, Latency-associated peptide (LAP) and Transforming growth factor beta-1 (TGF-beta-1) chains remain non-covalently linked rendering TGF-beta-1 inactive during storage in extracellular matrix. At the same time, LAP chain interacts with 'milieu molecules', such as ltbp1, lrrc32/garp and lrrc33/nrros that control activation of TGF-beta-1 and maintain it in a latent state during storage in extracellular milieus. TGF-beta-1 is released from LAP by integrins (ITGAV:ITGB6 or ITGAV:ITGB8): integrin-binding to LAP stabilizes an alternative conformation of the LAP bowtie tail and results in distortion of the LAP chain and subsequent release of the active TGF-beta-1. Once activated following release of LAP, TGF-beta-1 acts by binding to TGF-beta receptors (tgfbr1 and tgfbr2), which transduce signal. While expressed by many cells types, TGF-beta-1 only has a very localized range of action within cell environment thanks to fine regulation of its activation by Latency-associated peptide chain (LAP) and 'milieu molecules'. Plays an important role in bone remodeling: acts as a potent stimulator of osteoblastic bone formation. Can promote either T-helper 17 cells (Th17) or regulatory T-cells (Treg) lineage differentiation in a concentration-dependent manner. Can induce epithelial-to-mesenchymal transition (EMT) and cell migration in various cell types. This Cyprinus carpio (Common carp) protein is Transforming growth factor beta-1 proprotein (tgfb1).